A 240-amino-acid polypeptide reads, in one-letter code: MADS-box transcription factor 27 (240 aa).

The MADS-box domain maps to 1–61; it reads MGRGKIVIRR…GRLYEYSSTS (61 aa). The K-box domain maps to 86-176; sequence LKFWQREAAS…YKKISLIRQE (91 aa). The segment covering 220 to 231 has biased composition (polar residues); that stretch reads LPQHSDAEQSTA. The tract at residues 220–240 is disordered; it reads LPQHSDAEQSTAPKLGLQLNP.

As to expression, ubiquitous.

The protein localises to the nucleus. Functionally, probable transcription factor. The protein is MADS-box transcription factor 27 (MADS27) of Oryza sativa subsp. japonica (Rice).